The primary structure comprises 558 residues: MARVEL domain-containing protein 2 (558 aa).

A compositionally biased stretch (basic and acidic residues) spans 1–16 (MSNDGRSRNRDRRYDE). Disordered stretches follow at residues 1-58 (MSND…PPFG) and 115-145 (CSPPASPARPNHRSPLNSCKDPYGGSEGTFS). The Cytoplasmic portion of the chain corresponds to 1–194 (MSNDGRSRNR…YMKSWAGLLR (194 aa)). Over residues 45–58 (PLPPPPLPLQPPFG) the composition is skewed to pro residues. Ser116, Ser120, and Ser161 each carry phosphoserine. Thr166 carries the post-translational modification Phosphothreonine. The MARVEL domain maps to 188 to 367 (SWAGLLRILG…SALVCLKLWR (180 aa)). A helical membrane pass occupies residues 195-215 (ILGVVELLLGAGVFACVTAYI). At 216–223 (HKDSEWYN) the chain is on the extracellular side. The helical transmembrane segment at 224–244 (LFGYSQPYGMGGVGGLGSMYG) threads the bilayer. The Cytoplasmic portion of the chain corresponds to 245-254 (GYYYTGPKTP). The chain crosses the membrane as a helical span at residues 255–275 (FVLVVAGLAWITTIIILVLGM). The Extracellular segment spans residues 276 to 291 (SMYYRTILLDSNWWPL). Residues 292-312 (TEFGINVALFILYMAAAIVYV) traverse the membrane as a helical segment. Residues 313-319 (NDTNRGG) lie on the Cytoplasmic side of the membrane. The chain crosses the membrane as a helical span at residues 320-337 (LCYYPLFNTPVNAVFCRV). At 338 to 341 (EGGQ) the chain is on the extracellular side. The chain crosses the membrane as a helical span at residues 342 to 362 (IAAMIFLFVTMIVYLISALVC). Topologically, residues 363–558 (LKLWRHEAAR…VMNWDVQGYS (196 aa)) are cytoplasmic. Ser387 is subject to Phosphoserine. Lys412 participates in a covalent cross-link: Glycyl lysine isopeptide (Lys-Gly) (interchain with G-Cter in ubiquitin). Residues 439-548 (MPDYVAKYPV…IKQRIQEYDK (110 aa)) are a coiled coil. Residues 440–551 (PDYVAKYPVI…RIQEYDKVMN (112 aa)) form the OCEL domain.

This sequence belongs to the ELL/occludin family. In terms of assembly, interacts with TJP1. Interacts with the ubiquitin ligase ITCH. Interacts (via C-terminal cytoplasmic domain) with LSR (via the cytoplasmic domain), ILDR1 and ILDR2; the interaction is required to recruit MARVELD2 to tricellular contacts. Post-translationally, ubiquitinated by ITCH; but this ubiquitination does not lead to proteasomal degradation. Polyubiquitinated at Lys-412 via 'Lys-63'-linked ubiquitin chains; deubiquitinated by USP53. In terms of processing, phosphorylated.

Its subcellular location is the cell membrane. The protein localises to the cell junction. The protein resides in the tight junction. Functionally, plays a role in the formation of tricellular tight junctions and of epithelial barriers. Required for normal hearing via its role in the separation of the endolymphatic and perilymphatic spaces of the organ of Corti in the inner ear, and for normal survival of hair cells in the organ of Corti. This chain is MARVEL domain-containing protein 2, found in Homo sapiens (Human).